The sequence spans 445 residues: Exodeoxyribonuclease 7 large subunit (445 aa).

It belongs to the XseA family. Heterooligomer composed of large and small subunits.

The protein localises to the cytoplasm. It carries out the reaction Exonucleolytic cleavage in either 5'- to 3'- or 3'- to 5'-direction to yield nucleoside 5'-phosphates.. In terms of biological role, bidirectionally degrades single-stranded DNA into large acid-insoluble oligonucleotides, which are then degraded further into small acid-soluble oligonucleotides. The polypeptide is Exodeoxyribonuclease 7 large subunit (Xanthomonas oryzae pv. oryzae (strain MAFF 311018)).